Reading from the N-terminus, the 480-residue chain is F-box only protein 3 (480 aa).

The region spanning 10 to 56 (LLTLESLPTDPLLLILSFVDYRDLINCCYVSRRLSQLSTHDPLWRRH) is the F-box domain. One can recognise an ApaG domain in the interval 278–408 (VATTGDITVS…FHMACPTFRV (131 aa)). Residues 419-459 (EYEEMEEEAEEEEEEENDDSADMDESDESDEDENESDEGEG) show a composition bias toward acidic residues. The interval 419–464 (EYEEMEEEAEEEEEEENDDSADMDESDESDEDENESDEGEGEERRR) is disordered.

As to quaternary structure, part of a SCF (SKP1-cullin-F-box) protein ligase complex SCF(FBXO3) consisting of FBXO3, SKP1, CUL1 and RBX1. Interacts with PML, interaction is direct and takes place either alone or within the SCF complex.

The protein resides in the nucleus. The protein operates within protein modification; protein ubiquitination. In terms of biological role, substrate recognition component of the SCF (SKP1-CUL1-F-box protein)-type E3 ubiquitin ligase complex, SCF(FBXO3), which mediates the ubiquitination and subsequent proteasomal degradation of target proteins. Mediates the ubiquitination of HIPK2 and probably that of EP300, leading to rapid degradation by the proteasome. In the presence of PML, HIPK2 ubiquitination still occurs, but degradation is prevented. PML, HIPK2 and FBXO3 may act synergically to activate p53/TP53-dependent transactivation. The SCF(FBXO3) also acts as a regulator of inflammation by mediating ubiquitination and degradation of FBXL2 in response to lipopolysaccharide (LPS). The SCF(FBXO3) complex specifically recognizes FBXL2 phosphorylated at 'Thr-404' and promotes its ubiquitination. This Rattus norvegicus (Rat) protein is F-box only protein 3 (Fbxo3).